Reading from the N-terminus, the 124-residue chain is Small ribosomal subunit protein uS12cy (124 aa).

The protein belongs to the universal ribosomal protein uS12 family. Part of the 30S ribosomal subunit.

It is found in the plastid. The protein localises to the chloroplast. Functionally, with S4 and S5 plays an important role in translational accuracy. Located at the interface of the 30S and 50S subunits. In Olimarabidopsis pumila (Dwarf rocket), this protein is Small ribosomal subunit protein uS12cy (rps12-B).